Reading from the N-terminus, the 268-residue chain is DNA repair protein RecO (268 aa).

The protein belongs to the RecO family.

In terms of biological role, involved in DNA repair and RecF pathway recombination. The protein is DNA repair protein RecO of Mycobacterium leprae (strain Br4923).